We begin with the raw amino-acid sequence, 424 residues long: UDP-N-acetylglucosamine 1-carboxyvinyltransferase (424 aa).

22–23 lines the phosphoenolpyruvate pocket; it reads KN. R93 serves as a coordination point for UDP-N-acetyl-alpha-D-glucosamine. Catalysis depends on C117, which acts as the Proton donor. At C117 the chain carries 2-(S-cysteinyl)pyruvic acid O-phosphothioketal. UDP-N-acetyl-alpha-D-glucosamine-binding positions include 122 to 126, 162 to 165, D307, and I329; these read RPVDL and KVSV.

It belongs to the EPSP synthase family. MurA subfamily.

Its subcellular location is the cytoplasm. The enzyme catalyses phosphoenolpyruvate + UDP-N-acetyl-alpha-D-glucosamine = UDP-N-acetyl-3-O-(1-carboxyvinyl)-alpha-D-glucosamine + phosphate. It participates in cell wall biogenesis; peptidoglycan biosynthesis. Cell wall formation. Adds enolpyruvyl to UDP-N-acetylglucosamine. The sequence is that of UDP-N-acetylglucosamine 1-carboxyvinyltransferase from Histophilus somni (strain 129Pt) (Haemophilus somnus).